The primary structure comprises 210 residues: Putative Dihydrofolate reductase (210 aa).

A DHFR domain is found at 4 to 184 (TLYCVVAVDT…IFYMFETYIK (181 aa)).

The protein belongs to the dihydrofolate reductase family.

The catalysed reaction is (6S)-5,6,7,8-tetrahydrofolate + NADP(+) = 7,8-dihydrofolate + NADPH + H(+). In Human herpesvirus 8 type P (isolate GK18) (HHV-8), this protein is Putative Dihydrofolate reductase (ORF2).